Consider the following 58-residue polypeptide: MVAVQGTEDPFYYDYETVRNGGLIFAALAFIVGLVIILSKRFRCGAKRQHRQIPEDGL.

Residues 20–39 (NGGLIFAALAFIVGLVIILS) traverse the membrane as a helical segment.

Belongs to the FXYD family. As to quaternary structure, regulatory subunit of the sodium/potassium-transporting ATPase which is composed of a catalytic alpha subunit, an auxiliary non-catalytic beta subunit and an additional regulatory subunit. As to expression, highest levels expressed in the kidney and spleen. Restricted to the basolateral membrane in renal epithelial cells and varies in its level of expression along the nephron.

It localises to the membrane. May be involved in forming the receptor site for cardiac glycoside binding or may modulate the transport function of the sodium ATPase. This chain is Sodium/potassium-transporting ATPase subunit gamma (FXYD2), found in Bos taurus (Bovine).